Reading from the N-terminus, the 393-residue chain is 2-nitroimidazole transporter (393 aa).

Over 1–12 the chain is Cytoplasmic; it reads MTCSTSLSGKNR. The helical transmembrane segment at 13-33 threads the bilayer; it reads IVLIAGILMIATTLRVTFTGA. Topologically, residues 34–52 are periplasmic; that stretch reads APLLDTIRSAYSLTTAQTG. The chain crosses the membrane as a helical span at residues 53–73; it reads LLTTLPLLAFALISPLAAPVA. The Cytoplasmic portion of the chain corresponds to 74 to 80; it reads RRFGMER. 2 consecutive transmembrane segments (helical) span residues 81–101 and 102–122; these read SLFAALLLICAGIAIRSLPSP and YLLFGGTAVIGGGIALGNVLL. Residues 123–140 lie on the Cytoplasmic side of the membrane; that stretch reads PGLIKRDFPHSVARLTGA. Residues 141 to 161 form a helical membrane-spanning segment; the sequence is YSLTMGAAAALGSAMVVPLAL. Over 162-163 the chain is Periplasmic; it reads NG. A helical membrane pass occupies residues 164–184; sequence FGWQGALLMLMCFPLLALFLW. Over 185 to 218 the chain is Cytoplasmic; it reads LPQWRSQQHANLSTSRALHTRGIWRSPLAWQVTL. Residues 219-239 traverse the membrane as a helical segment; the sequence is FLGINSLVYYVIIGWLPAILI. Over 240 to 249 the chain is Periplasmic; that stretch reads SHGYSEAQAG. Residues 250–270 form a helical membrane-spanning segment; that stretch reads SLHGLLQLATAAPGLLIPLFL. Residues 271 to 278 lie on the Cytoplasmic side of the membrane; the sequence is HHVKDQRG. The helical transmembrane segment at 279–299 threads the bilayer; that stretch reads IAAFVALMCAVGAVGLCFMPA. Residues 300–304 are Periplasmic-facing; sequence HAITW. A helical membrane pass occupies residues 305–325; it reads TLLFGFGSGATMILGLTFIGL. Over 326–334 the chain is Cytoplasmic; that stretch reads RASSAHQAA. A helical membrane pass occupies residues 335–355; it reads ALSGMAQSVGYLLAACGPPLM. The Periplasmic segment spans residues 356-366; that stretch reads GKIHDANGNWS. The helical transmembrane segment at 367 to 387 threads the bilayer; that stretch reads VPLMGVAILSLLMAIFGLCAG. Over 388–393 the chain is Cytoplasmic; that stretch reads RDKEIR.

This sequence belongs to the major facilitator superfamily. Cyanate porter (TC 2.A.1.17) family.

It is found in the cell inner membrane. In terms of biological role, involved in efflux of 2-nitroimidazole. The chain is 2-nitroimidazole transporter from Escherichia coli (strain K12).